We begin with the raw amino-acid sequence, 765 residues long: Transcription factor SKN7 (765 aa).

The interval 1 to 42 is disordered; the sequence is MPPTNGEGGSQQPQQQQQQQQQQQQQQQQQQQQQQGGSGSSD. Residues 11–35 are compositionally biased toward low complexity; it reads QQPQQQQQQQQQQQQQQQQQQQQQQ. The tract at residues 40–145 is DNA-binding domain; that stretch reads SSDFVRKLYK…NLDNIRRKAP (106 aa). Residues 157-198 adopt a coiled-coil conformation; sequence FNASQQQIAALSESLQATQQQLQALQQQCYELEKTNRLLVSE. The segment at 160–220 is hydrophobic repeat HR-A/B; the sequence is SQQQIAALSE…QASNEIINHL (61 aa). Residues 371–391 are disordered; the sequence is SSSQITPSQITPPPKDQMSSM. A Response regulatory domain is found at 398–514; that stretch reads RVLLVEDDKT…NMSRLLRRHL (117 aa). Position 449 is a 4-aspartylphosphate (Asp449). The segment at 542-765 is transactivation domain; the sequence is TAGPATTGVG…PGVGVAGFVQ (224 aa). Residues 550–564 show a composition bias toward gly residues; it reads VGVGVAGAPSGGAHG. Disordered stretches follow at residues 550-647 and 686-765; these read VGVG…PAGL and PGAM…GFVQ. Over residues 569-584 the composition is skewed to low complexity; sequence AQHQQGYAMAPPTTMQ. Residues 626 to 636 show a composition bias toward pro residues; it reads QPPPPPTPTQP. Composition is skewed to low complexity over residues 637–647 and 699–715; these read SPTSAAPPAGL and GVGH…AGAR. The segment covering 755–765 has biased composition (gly residues); it reads HPGVGVAGFVQ.

Belongs to the SKN7 family. Homotrimer.

It is found in the nucleus. Transcription factor that is part of a SLN1-YPD1-SKN7 two-component regulatory system, which controls gene expression in response to changes in the osmolarity of the extracellular environment. Under low osmotic conditions, phosphorylated and activated by the phosphorelay intermediate protein YPD1. Also activated in response to oxidative stress, independent on the two-component regulatory system. Regulates heat shock genes in response to oxidative stress and genes involved in cell wall integrity in response to osmotic changes. The sequence is that of Transcription factor SKN7 from Chaetomium thermophilum (strain DSM 1495 / CBS 144.50 / IMI 039719) (Thermochaetoides thermophila).